The following is a 128-amino-acid chain: Large ribosomal subunit protein bL17 (128 aa).

This sequence belongs to the bacterial ribosomal protein bL17 family. In terms of assembly, part of the 50S ribosomal subunit. Contacts protein L32.

The protein is Large ribosomal subunit protein bL17 of Streptococcus equi subsp. zooepidemicus (strain H70).